A 249-amino-acid polypeptide reads, in one-letter code: Proteasome subunit alpha (249 aa).

The segment at 229 to 249 is disordered; it reads EAREAEEAAEAQSSEDGGATD.

The protein belongs to the peptidase T1A family. In terms of assembly, the 20S proteasome core is composed of 14 alpha and 14 beta subunits that assemble into four stacked heptameric rings, resulting in a barrel-shaped structure. The two inner rings, each composed of seven catalytic beta subunits, are sandwiched by two outer rings, each composed of seven alpha subunits. The catalytic chamber with the active sites is on the inside of the barrel. Has a gated structure, the ends of the cylinder being occluded by the N-termini of the alpha-subunits. Is capped by the proteasome-associated ATPase, ARC.

It localises to the cytoplasm. Its pathway is protein degradation; proteasomal Pup-dependent pathway. The formation of the proteasomal ATPase ARC-20S proteasome complex, likely via the docking of the C-termini of ARC into the intersubunit pockets in the alpha-rings, may trigger opening of the gate for substrate entry. Interconversion between the open-gate and close-gate conformations leads to a dynamic regulation of the 20S proteasome proteolysis activity. In terms of biological role, component of the proteasome core, a large protease complex with broad specificity involved in protein degradation. The polypeptide is Proteasome subunit alpha (Thermobifida fusca (strain YX)).